The sequence spans 118 residues: Large ribosomal subunit protein bL17 (118 aa).

Belongs to the bacterial ribosomal protein bL17 family. In terms of assembly, part of the 50S ribosomal subunit. Contacts protein L32.

In Campylobacter fetus subsp. fetus (strain 82-40), this protein is Large ribosomal subunit protein bL17.